Reading from the N-terminus, the 77-residue chain is Acyl carrier protein (77 aa).

The 76-residue stretch at 2–77 (SNIEERVKKI…AAIDYVTANQ (76 aa)) folds into the Carrier domain. Serine 37 bears the O-(pantetheine 4'-phosphoryl)serine mark.

It belongs to the acyl carrier protein (ACP) family. In terms of processing, 4'-phosphopantetheine is transferred from CoA to a specific serine of apo-ACP by AcpS. This modification is essential for activity because fatty acids are bound in thioester linkage to the sulfhydryl of the prosthetic group.

Its subcellular location is the cytoplasm. Its pathway is lipid metabolism; fatty acid biosynthesis. Its function is as follows. Carrier of the growing fatty acid chain in fatty acid biosynthesis. This chain is Acyl carrier protein, found in Colwellia psychrerythraea (strain 34H / ATCC BAA-681) (Vibrio psychroerythus).